Here is a 334-residue protein sequence, read N- to C-terminus: MIEADRLIQPQLQGQDDVIDRAMRPKLLDEYTGQDDTRAQLKVFIQAAKNREEALDHMLIYGPPGLGKTTLAMIVANEMGVNIKSTSGPVLEKAGDLAALLTNLEAGDVLFIDEIHRLSPVVEEILYPAMEDYQLDIMIGEGPAARSIKLDLPPFTLVGATTRAGALTSPLRARFGIPLRLEFYNVKDLSTIVTRSAQVMGLAIDSEGATEIAKRSRGTPRIANRLLRRVRDYAEVQHDGAVTQNVAELALNLLDVDGEGFDYMDRKLLLAIIDKFMGGPVGLDNLAAAIGEERETIEDVLEPFLIQQGFIQRTPRGRIATARAYVHFGMIKPE.

A large ATPase domain (RuvB-L) region spans residues 4 to 184; the sequence is ADRLIQPQLQ…FGIPLRLEFY (181 aa). ATP contacts are provided by residues arginine 24, glycine 65, lysine 68, threonine 69, threonine 70, 131–133, arginine 174, tyrosine 184, and arginine 221; that span reads EDY. Threonine 69 is a binding site for Mg(2+). Residues 185-255 are small ATPAse domain (RuvB-S); that stretch reads NVKDLSTIVT…VAELALNLLD (71 aa). Residues 258-334 are head domain (RuvB-H); sequence GEGFDYMDRK…YVHFGMIKPE (77 aa). DNA-binding residues include arginine 294, arginine 313, and arginine 318.

It belongs to the RuvB family. In terms of assembly, homohexamer. Forms an RuvA(8)-RuvB(12)-Holliday junction (HJ) complex. HJ DNA is sandwiched between 2 RuvA tetramers; dsDNA enters through RuvA and exits via RuvB. An RuvB hexamer assembles on each DNA strand where it exits the tetramer. Each RuvB hexamer is contacted by two RuvA subunits (via domain III) on 2 adjacent RuvB subunits; this complex drives branch migration. In the full resolvosome a probable DNA-RuvA(4)-RuvB(12)-RuvC(2) complex forms which resolves the HJ.

It is found in the cytoplasm. It catalyses the reaction ATP + H2O = ADP + phosphate + H(+). The RuvA-RuvB-RuvC complex processes Holliday junction (HJ) DNA during genetic recombination and DNA repair, while the RuvA-RuvB complex plays an important role in the rescue of blocked DNA replication forks via replication fork reversal (RFR). RuvA specifically binds to HJ cruciform DNA, conferring on it an open structure. The RuvB hexamer acts as an ATP-dependent pump, pulling dsDNA into and through the RuvAB complex. RuvB forms 2 homohexamers on either side of HJ DNA bound by 1 or 2 RuvA tetramers; 4 subunits per hexamer contact DNA at a time. Coordinated motions by a converter formed by DNA-disengaged RuvB subunits stimulates ATP hydrolysis and nucleotide exchange. Immobilization of the converter enables RuvB to convert the ATP-contained energy into a lever motion, pulling 2 nucleotides of DNA out of the RuvA tetramer per ATP hydrolyzed, thus driving DNA branch migration. The RuvB motors rotate together with the DNA substrate, which together with the progressing nucleotide cycle form the mechanistic basis for DNA recombination by continuous HJ branch migration. Branch migration allows RuvC to scan DNA until it finds its consensus sequence, where it cleaves and resolves cruciform DNA. The polypeptide is Holliday junction branch migration complex subunit RuvB (Shewanella oneidensis (strain ATCC 700550 / JCM 31522 / CIP 106686 / LMG 19005 / NCIMB 14063 / MR-1)).